A 545-amino-acid polypeptide reads, in one-letter code: Glutamine-dependent NAD(+) synthetase (545 aa).

A CN hydrolase domain is found at L5–R247. E46 acts as the Proton acceptor; for glutaminase activity in catalysis. The active-site For glutaminase activity is K113. Y119 is an L-glutamine binding site. C151 functions as the Nucleophile; for glutaminase activity in the catalytic mechanism. L-glutamine-binding residues include S177 and K183. Residues V269–G545 form a ligase region. G292–S299 contributes to the ATP binding site. N375 lines the deamido-NAD(+) pocket. T399 is a binding site for ATP. 2 residues coordinate deamido-NAD(+): E404 and K516.

This sequence in the C-terminal section; belongs to the NAD synthetase family.

It catalyses the reaction deamido-NAD(+) + L-glutamine + ATP + H2O = L-glutamate + AMP + diphosphate + NAD(+) + H(+). The protein operates within cofactor biosynthesis; NAD(+) biosynthesis; NAD(+) from deamido-NAD(+) (L-Gln route): step 1/1. Catalyzes the ATP-dependent amidation of deamido-NAD to form NAD. Uses L-glutamine as a nitrogen source. This is Glutamine-dependent NAD(+) synthetase from Xylella fastidiosa (strain 9a5c).